A 314-amino-acid polypeptide reads, in one-letter code: CD-NTase-associated protein 12 (314 aa).

In terms of domain architecture, TIR spans 5 to 129; that stretch reads RIFIGSSSEE…VKGISLARFK (125 aa). The segment at 160–314 is STING domain; it reads SSTLAAVYYE…DLIKIVDEDN (155 aa). F171, P234, and D252 together coordinate 3',3'-c-di-GMP.

This sequence in the C-terminal section; belongs to the bacterial STING family. Homodimer. Forms homodimers; in the presence of c-di-GMP forms filaments with an ordered array of parallel-stacked subunits.

It catalyses the reaction NAD(+) + H2O = ADP-D-ribose + nicotinamide + H(+). Its activity is regulated as follows. NAD(+) hydrolase activity is strongly stimulated by c-di-GMP, weakly by 3'3'-cGAMP, very weakly by c-di-AMP but not at all by 2'3'-cGAMP. Self-association of TIR domains is required for NADase activity. Its function is as follows. Effector protein of a CBASS antiviral system with NAD(+) hydrolase activity. CBASS (cyclic oligonucleotide-based antiphage signaling system) provides immunity against bacteriophage. The CD-NTase protein synthesizes cyclic nucleotides in response to infection; these serve as specific second messenger signals. The signals activate a diverse range of effectors, leading to bacterial cell death and thus abortive phage infection. A type I-(GG) CBASS system. Functionally, binds c-di-GMP (synthesized by the cognate CdnE encoded upstream in the same operon), and about 10-fold less well 3'3'-cGAMP, but not c-di-AMP, 2'-3'-cGAMP or cUMP-AMP (tested without the N-terminal TIR domain). Upon activation by c-di-GMP forms filaments which hydrolyze NAD(+); filament formation is required for enzyme activation. The chain is CD-NTase-associated protein 12 from Capnocytophaga granulosa (strain ATCC 51502 / DSM 11449 / JCM 8566 / LMG 16022 / NCTC 12948 / B0611).